The sequence spans 128 residues: Aspartate 1-decarboxylase (128 aa).

The active-site Schiff-base intermediate with substrate; via pyruvic acid is serine 25. Serine 25 carries the post-translational modification Pyruvic acid (Ser). Threonine 57 is a binding site for substrate. Tyrosine 58 acts as the Proton donor in catalysis. Position 73–75 (glycine 73–alanine 75) interacts with substrate.

It belongs to the PanD family. In terms of assembly, heterooctamer of four alpha and four beta subunits. Pyruvate is required as a cofactor. Is synthesized initially as an inactive proenzyme, which is activated by self-cleavage at a specific serine bond to produce a beta-subunit with a hydroxyl group at its C-terminus and an alpha-subunit with a pyruvoyl group at its N-terminus.

The protein localises to the cytoplasm. The catalysed reaction is L-aspartate + H(+) = beta-alanine + CO2. The protein operates within cofactor biosynthesis; (R)-pantothenate biosynthesis; beta-alanine from L-aspartate: step 1/1. Catalyzes the pyruvoyl-dependent decarboxylation of aspartate to produce beta-alanine. The sequence is that of Aspartate 1-decarboxylase from Burkholderia pseudomallei (strain 668).